The chain runs to 875 residues: MAVALQQQSKTNMGPKGITFSGNTFTVPETHDMVKTLFDPTVRKSYFELVILALLASNGLVFWLVKTNSTRIEIFIGLYLFWRLSYNFGIGYLLHQQSNYHKLVNWANKLNIFDEKNHSIASRLIKSEISAQMGPKYKISKYPVDFNTWLVFRKVVDLILMSDFTTFIGVVVTCAMDNDLQFLNTSQQEPWIVYSRLIVGAGLILFNLWVKVDAHNIIKDYAWYWGDFFFRQINNEDLIFDGVFEMFPHPMYSVGYAGYYGFALIAKSYRVLVVAVFGHFLQMIFLHYIENPHIDKLYGPSGNEADYQKITKIKDLKNFDNLKPLVGLYNFSWLRAADLLTLIMVTTYSVIIPAFASSIVGTAQFRGAKINIAHCMFALTVAIKVFESLSINIFLVLQSYYKLFTKRYLANDIPIEKSLSNWAIIYNGLISWTYASFVGLNFFHYITGMEYSKFYFYDWVYLRSFLGALLILTQVWINSSIIDSIGYFGWFYGDFFLPTSPQRSHLTKAGVYRYLNNPEQLFGVCGVMGLTLIAPSLENFVCCLLWVSNNFFRINFVEKVHMIKVYGEKEVFQDSGVTKTFKKQLIPDVISRRLSSNDEAPNFGRHRSTSHLVTGITDTLESFIKELRQSNAKLSRQNLLELSQNLYFDNSDYQITIDNLQKSDDRMPKYTTIGTPIEITWKCPENHSDKDWIGLYKVVQTTYSRSKTLISSSGRWTWVESTRGSYVFTGSKLFWEEGIYEFRFHLDGKHEVAYISEPFEIKAPKIEVPDTLSASKEFAEQLKLSVFDPVTDIKIPSIESPICDTVEKSHHLLETYRRLAKLISTSTGITISSNFLFNAGTEHELSVHQLSKKLINIKKVLEDLSPAAIDEKKRQ.

Residues 1-44 (MAVALQQQSKTNMGPKGITFSGNTFTVPETHDMVKTLFDPTVRK) lie on the Lumenal side of the membrane. The chain crosses the membrane as a helical span at residues 45-65 (SYFELVILALLASNGLVFWLV). Residues 66–73 (KTNSTRIE) lie on the Cytoplasmic side of the membrane. A helical transmembrane segment spans residues 74-94 (IFIGLYLFWRLSYNFGIGYLL). Residues 95-154 (HQQSNYHKLVNWANKLNIFDEKNHSIASRLIKSEISAQMGPKYKISKYPVDFNTWLVFRK) are Lumenal-facing. The helical transmembrane segment at 155–175 (VVDLILMSDFTTFIGVVVTCA) threads the bilayer. Residues 176-189 (MDNDLQFLNTSQQE) lie on the Cytoplasmic side of the membrane. Residues 190-210 (PWIVYSRLIVGAGLILFNLWV) traverse the membrane as a helical segment. Residues 211 to 245 (KVDAHNIIKDYAWYWGDFFFRQINNEDLIFDGVFE) are Lumenal-facing. Residues 246–266 (MFPHPMYSVGYAGYYGFALIA) form a helical membrane-spanning segment. Residues 267–270 (KSYR) are Cytoplasmic-facing. Residues 271 to 291 (VLVVAVFGHFLQMIFLHYIEN) form a helical membrane-spanning segment. The Lumenal portion of the chain corresponds to 292–339 (PHIDKLYGPSGNEADYQKITKIKDLKNFDNLKPLVGLYNFSWLRAADL). A helical membrane pass occupies residues 340 to 360 (LTLIMVTTYSVIIPAFASSIV). Topologically, residues 361 to 376 (GTAQFRGAKINIAHCM) are cytoplasmic. The chain crosses the membrane as a helical span at residues 377–397 (FALTVAIKVFESLSINIFLVL). The Lumenal segment spans residues 398-422 (QSYYKLFTKRYLANDIPIEKSLSNW). The chain crosses the membrane as a helical span at residues 423–443 (AIIYNGLISWTYASFVGLNFF). Over 444-464 (HYITGMEYSKFYFYDWVYLRS) the chain is Cytoplasmic. The chain crosses the membrane as a helical span at residues 465–485 (FLGALLILTQVWINSSIIDSI). Topologically, residues 486-526 (GYFGWFYGDFFLPTSPQRSHLTKAGVYRYLNNPEQLFGVCG) are lumenal. The chain crosses the membrane as a helical span at residues 527–547 (VMGLTLIAPSLENFVCCLLWV). The Cytoplasmic portion of the chain corresponds to 548–875 (SNNFFRINFV…PAAIDEKKRQ (328 aa)).

The protein belongs to the class VI-like SAM-binding methyltransferase superfamily. CHO2 family.

It is found in the endoplasmic reticulum membrane. The enzyme catalyses a 1,2-diacyl-sn-glycero-3-phosphoethanolamine + S-adenosyl-L-methionine = a 1,2-diacyl-sn-glycero-3-phospho-N-methylethanolamine + S-adenosyl-L-homocysteine + H(+). It participates in phospholipid metabolism; phosphatidylcholine biosynthesis. Catalyzes the first step of the methylation pathway of phosphatidylcholine biosynthesis, the SAM-dependent methylation of phosphatidylethanolamine (PE) to phosphatidylmonomethylethanolamine (PMME). The chain is Phosphatidylethanolamine N-methyltransferase (CHO2) from Meyerozyma guilliermondii (strain ATCC 6260 / CBS 566 / DSM 6381 / JCM 1539 / NBRC 10279 / NRRL Y-324) (Yeast).